Consider the following 416-residue polypeptide: Chromate transport protein (416 aa).

The segment at 1-21 (MSVANEESYRPSKATDATTEA) is disordered. 11 consecutive transmembrane segments (helical) span residues 99–119 (LGGV…MFAL), 128–148 (FVGT…IALI), 160–177 (LLDR…LAAI), 181–198 (DFWI…LLVL), 204–224 (ALLV…WAAP), 237–257 (ASVL…FGGA), 283–303 (LALS…VGYV), 308–328 (IGAV…SLIF), 341–361 (LHAF…ATTI), 371–391 (VPSL…LYAW), and 395–415 (LNVV…FPNQ).

This sequence belongs to the chromate ion transporter (CHR) (TC 2.A.51) family.

It is found in the cell inner membrane. Its function is as follows. This protein reduces chromate accumulation and is essential for chromate resistance. The chain is Chromate transport protein from Pseudomonas aeruginosa.